The primary structure comprises 360 residues: Phospho-N-acetylmuramoyl-pentapeptide-transferase (360 aa).

The next 10 helical transmembrane spans lie at 26 to 46 (AILGLLTALMFSLWWGPKLIE), 74 to 94 (MGGLMILGAIFISVLLWGDLG), 97 to 117 (YVWVMLFVLGSFGMIGFIDDY), 132 to 152 (WKYILQSLAALIIAFFLYTTA), 168 to 188 (VMPQLGAVFIVLAYFTIVGSS), 199 to 219 (GLAIMPTVMVAAAFALIAYLS), 236 to 256 (SGELVIVCTAIVGAGLGFLWF), 263 to 283 (VFMGDVGSLSLGAALGAIAVL), 288 to 308 (ILLVIMGGVFVMETVSVILQV), and 338 to 358 (VIVRFWIISIFLVLLGLATLK).

This sequence belongs to the glycosyltransferase 4 family. MraY subfamily. Mg(2+) is required as a cofactor.

Its subcellular location is the cell inner membrane. It carries out the reaction UDP-N-acetyl-alpha-D-muramoyl-L-alanyl-gamma-D-glutamyl-meso-2,6-diaminopimeloyl-D-alanyl-D-alanine + di-trans,octa-cis-undecaprenyl phosphate = di-trans,octa-cis-undecaprenyl diphospho-N-acetyl-alpha-D-muramoyl-L-alanyl-D-glutamyl-meso-2,6-diaminopimeloyl-D-alanyl-D-alanine + UMP. It functions in the pathway cell wall biogenesis; peptidoglycan biosynthesis. Its function is as follows. Catalyzes the initial step of the lipid cycle reactions in the biosynthesis of the cell wall peptidoglycan: transfers peptidoglycan precursor phospho-MurNAc-pentapeptide from UDP-MurNAc-pentapeptide onto the lipid carrier undecaprenyl phosphate, yielding undecaprenyl-pyrophosphoryl-MurNAc-pentapeptide, known as lipid I. This Shewanella sp. (strain ANA-3) protein is Phospho-N-acetylmuramoyl-pentapeptide-transferase.